A 261-amino-acid chain; its full sequence is Probable septum site-determining protein MinC (261 aa).

A disordered region spans residues 106–144 (RAPAAKPADEAEPAAVPAVETAAAPAAAAAPEQSSDPAP). Over residues 118–144 (PAAVPAVETAAAPAAAAAPEQSSDPAP) the composition is skewed to low complexity.

This sequence belongs to the MinC family. In terms of assembly, interacts with MinD and FtsZ.

Cell division inhibitor that blocks the formation of polar Z ring septums. Rapidly oscillates between the poles of the cell to destabilize FtsZ filaments that have formed before they mature into polar Z rings. Prevents FtsZ polymerization. The polypeptide is Probable septum site-determining protein MinC (Burkholderia orbicola (strain MC0-3)).